Reading from the N-terminus, the 170-residue chain is UPF0201 protein MJ1564 (170 aa).

Acidic residues predominate over residues 133–148; sequence NEDELEEEEEKEDSEE. The disordered stretch occupies residues 133–170; sequence NEDELEEEEEKEDSEEIKEGHKEENNLKIKVIDNSSGD. The segment covering 149 to 163 has biased composition (basic and acidic residues); the sequence is IKEGHKEENNLKIKV.

The protein belongs to the UPF0201 family.

The chain is UPF0201 protein MJ1564 from Methanocaldococcus jannaschii (strain ATCC 43067 / DSM 2661 / JAL-1 / JCM 10045 / NBRC 100440) (Methanococcus jannaschii).